A 336-amino-acid polypeptide reads, in one-letter code: Electron transfer flavoprotein subunit alpha (336 aa).

Residue 275 to 303 (LYIACGISGAIQHLAGMQDSDYIIAINKD) coordinates FAD.

This sequence belongs to the ETF alpha-subunit/FixB family. As to quaternary structure, heterodimer of an alpha and a beta subunit. FAD serves as cofactor.

Functionally, the electron transfer flavoprotein serves as a specific electron acceptor for other dehydrogenases. It transfers the electrons to the main respiratory chain via ETF-ubiquinone oxidoreductase (ETF dehydrogenase). The polypeptide is Electron transfer flavoprotein subunit alpha (etfA) (Clostridium acetobutylicum (strain ATCC 824 / DSM 792 / JCM 1419 / IAM 19013 / LMG 5710 / NBRC 13948 / NRRL B-527 / VKM B-1787 / 2291 / W)).